The sequence spans 127 residues: Major sperm protein 49 (127 aa).

An N-acetylalanine modification is found at A2. Residues 9–126 (DIQTQPGTKI…RRKNLPIEYN (118 aa)) enclose the MSP domain.

Sperm.

The protein resides in the cell projection. The protein localises to the pseudopodium. Its subcellular location is the cytoplasm. It localises to the cytoskeleton. Functionally, central component in molecular interactions underlying sperm crawling. Forms an extensive filament system that extends from sperm villipoda, along the leading edge of the pseudopod. The polypeptide is Major sperm protein 49 (msp-49) (Caenorhabditis elegans).